The following is a 117-amino-acid chain: Large ribosomal subunit protein bL20 (117 aa).

The protein belongs to the bacterial ribosomal protein bL20 family.

In terms of biological role, binds directly to 23S ribosomal RNA and is necessary for the in vitro assembly process of the 50S ribosomal subunit. It is not involved in the protein synthesizing functions of that subunit. The protein is Large ribosomal subunit protein bL20 of Thermomicrobium roseum (strain ATCC 27502 / DSM 5159 / P-2).